The chain runs to 441 residues: Glutamate-1-semialdehyde 2,1-aminomutase (441 aa).

Lys279 carries the N6-(pyridoxal phosphate)lysine modification.

The protein belongs to the class-III pyridoxal-phosphate-dependent aminotransferase family. HemL subfamily. In terms of assembly, homodimer. Pyridoxal 5'-phosphate is required as a cofactor.

The protein resides in the cytoplasm. It catalyses the reaction (S)-4-amino-5-oxopentanoate = 5-aminolevulinate. Its pathway is porphyrin-containing compound metabolism; protoporphyrin-IX biosynthesis; 5-aminolevulinate from L-glutamyl-tRNA(Glu): step 2/2. This Leptospira borgpetersenii serovar Hardjo-bovis (strain JB197) protein is Glutamate-1-semialdehyde 2,1-aminomutase.